The primary structure comprises 297 residues: Polyketide transferase ATR5 (297 aa).

Positions 49–272 (DVAVWFQKRG…FVLAENKGHM (224 aa)) are abhydrolase domain.

Belongs to the polyketide transferase af380 family.

It participates in mycotoxin biosynthesis. Its function is as follows. Polyketide transferase; part of the core atranone cluster (CAC) which products are predicted to catalyze most or all steps of atranone synthesis, starting from geranylgeranyl pyrophosphate (GGPP). The initial cyclization of GGPP to dolabellane is probably performed by the terpene cyclase ATR13. The Baeyer-Villiger oxidation near the end of the atranone synthesis, which converts atranones D and E to atranones F and G is predicted to be catalyzed by the monooxygenase ATR8. Of the CAC's other predicted gene products, the reducing PKS ATR6 might synthesize a polyketide chain. This polyketide is probably transferred onto the atranone backbone by the polyketide transferase ATR5. Other predicted CAC products include 4 oxygenases (ATR2, ATR3, ATR4, and ATR14), 3 short-chain reductases (ATR7, ATR9, and ATR10), and a methyltransferase (ATR12). These may all be involved in the various steps of atranone biosynthesis, although their specific roles must await experimental determination. The chain is Polyketide transferase ATR5 from Stachybotrys chlorohalonatus (strain IBT 40285).